The following is a 679-amino-acid chain: Transmembrane protein 214-B (679 aa).

A disordered region spans residues methionine 1–valine 94. A compositionally biased stretch (basic and acidic residues) spans lysine 18–leucine 30. Asparagine 70, asparagine 298, and asparagine 322 each carry an N-linked (GlcNAc...) asparagine glycan. 2 helical membrane passes run glycine 468–leucine 488 and leucine 606–valine 626.

It belongs to the TMEM214 family. Constitutively interacts with CASP4; required for the localization of procaspase 4 to the ER.

The protein resides in the endoplasmic reticulum membrane. Critical mediator, in cooperation with CASP4, of endoplasmic reticulum-stress induced apoptosis. Required or the activation of CASP4 following endoplasmic reticulum stress. The protein is Transmembrane protein 214-B (tmem214-b) of Xenopus laevis (African clawed frog).